Consider the following 717-residue polypeptide: DNA polymerase iota (717 aa).

The interval 1-22 (MEPLHAGAAGSSRAVCSQGPPT) is disordered. The UmuC domain maps to 30-243 (IVHVDLDCFY…NHIKEIPGIG (214 aa)). Mg(2+) is bound by residues Asp-34 and Leu-35. 2 residues coordinate a 2'-deoxyribonucleoside 5'-triphosphate: Tyr-39 and Arg-71. Residue Asp-126 participates in Mg(2+) binding. Glu-127 functions as the Proton acceptor in the catalytic mechanism. DNA-binding regions lie at residues 300–307 (QSFSEEDT) and 343–360 (RLVIRRYSDKHCNRESRQ). Residues 500 to 517 (VDQEVFKQLPADIQEEIL) carry the Ubiquitin-binding 1 (UBM1) motif. Disordered stretches follow at residues 549–589 (QMQA…SHPS), 603–622 (KDEQTSQGPTESQGCQFSST), and 644–687 (HRTV…DIDP). A compositionally biased stretch (low complexity) spans 575-589 (PGTSGLSPGSTSHPS). Polar residues-rich tracts occupy residues 607–622 (TSQGPTESQGCQFSST) and 652–662 (QTATASHQGLE). The span at 665 to 679 (QGLESRELDSAEEKL) shows a compositional bias: basic and acidic residues. Positions 685–702 (IDPQVFYELPEEVQKELM) match the Ubiquitin-binding 2 (UBM2) motif.

This sequence belongs to the DNA polymerase type-Y family. As to quaternary structure, interacts with POLH. Interacts with REV1. Interacts with ubiquitin. Requires Mg(2+) as cofactor. Mn(2+) is required as a cofactor. Monoubiquitinated. Protein monoubiquitination prevents POLI binding to ubiquitin via the ubiquitin-binding motif 1 and ubiquitin-binding motif 2. Detected in testis, and at very low levels in spleen, lung and brain. Detected in round spermatids, but not in prophase spermatocytes.

Its subcellular location is the nucleus. The enzyme catalyses DNA(n) + a 2'-deoxyribonucleoside 5'-triphosphate = DNA(n+1) + diphosphate. Error-prone DNA polymerase specifically involved in DNA repair. Plays an important role in translesion synthesis, where the normal high-fidelity DNA polymerases cannot proceed and DNA synthesis stalls. Favors Hoogsteen base-pairing in the active site. Inserts the correct base with high-fidelity opposite an adenosine template. Exhibits low fidelity and efficiency opposite a thymidine template, where it will preferentially insert guanosine. May play a role in hypermutation of immunoglobulin genes. Forms a Schiff base with 5'-deoxyribose phosphate at abasic sites, but may not have lyase activity. This chain is DNA polymerase iota (Poli), found in Mus musculus (Mouse).